Reading from the N-terminus, the 159-residue chain is Endoribonuclease YbeY (159 aa).

Positions 123, 127, and 133 each coordinate Zn(2+).

The protein belongs to the endoribonuclease YbeY family. The cofactor is Zn(2+).

The protein localises to the cytoplasm. Its function is as follows. Single strand-specific metallo-endoribonuclease involved in late-stage 70S ribosome quality control and in maturation of the 3' terminus of the 16S rRNA. The polypeptide is Endoribonuclease YbeY (Bacillus pumilus (strain SAFR-032)).